Consider the following 89-residue polypeptide: Large ribosomal subunit protein bL31B (89 aa).

It belongs to the bacterial ribosomal protein bL31 family. Type B subfamily. As to quaternary structure, part of the 50S ribosomal subunit.

The chain is Large ribosomal subunit protein bL31B from Aeromonas hydrophila subsp. hydrophila (strain ATCC 7966 / DSM 30187 / BCRC 13018 / CCUG 14551 / JCM 1027 / KCTC 2358 / NCIMB 9240 / NCTC 8049).